The sequence spans 202 residues: Holliday junction resolvase RecU (202 aa).

T85, D87, E100, and Q119 together coordinate Mg(2+).

It belongs to the RecU family. Mg(2+) is required as a cofactor.

The protein localises to the cytoplasm. It carries out the reaction Endonucleolytic cleavage at a junction such as a reciprocal single-stranded crossover between two homologous DNA duplexes (Holliday junction).. In terms of biological role, endonuclease that resolves Holliday junction intermediates in genetic recombination. Cleaves mobile four-strand junctions by introducing symmetrical nicks in paired strands. Promotes annealing of linear ssDNA with homologous dsDNA. Required for DNA repair, homologous recombination and chromosome segregation. In Streptococcus pyogenes serotype M5 (strain Manfredo), this protein is Holliday junction resolvase RecU.